Consider the following 328-residue polypeptide: Peroxidase 63 (328 aa).

Positions 1 to 27 are cleaved as a signal peptide; the sequence is MAEQSQLKNLTIILLLLCLSFQSLSFA. Cystine bridges form between Cys-41/Cys-122, Cys-74/Cys-79, Cys-128/Cys-324, and Cys-207/Cys-234. His-72 acts as the Proton acceptor in catalysis. Ca(2+) contacts are provided by Asp-73, Gly-78, Asp-80, and Ser-82. Pro-170 contributes to the substrate binding site. His-200 contributes to the heme b binding site. Thr-201 provides a ligand contact to Ca(2+). N-linked (GlcNAc...) asparagine glycans are attached at residues Asn-217 and Asn-218. 3 residues coordinate Ca(2+): Asp-248, Thr-251, and Asp-256.

This sequence belongs to the peroxidase family. Classical plant (class III) peroxidase subfamily. The cofactor is heme b. Ca(2+) is required as a cofactor.

The protein localises to the secreted. The catalysed reaction is 2 a phenolic donor + H2O2 = 2 a phenolic radical donor + 2 H2O. Its function is as follows. Removal of H(2)O(2), oxidation of toxic reductants, biosynthesis and degradation of lignin, suberization, auxin catabolism, response to environmental stresses such as wounding, pathogen attack and oxidative stress. These functions might be dependent on each isozyme/isoform in each plant tissue. This is Peroxidase 63 (PER63) from Arabidopsis thaliana (Mouse-ear cress).